Consider the following 525-residue polypeptide: ATP synthase subunit alpha (525 aa).

169–176 (GDRQTGKT) contributes to the ATP binding site.

It belongs to the ATPase alpha/beta chains family. In terms of assembly, F-type ATPases have 2 components, CF(1) - the catalytic core - and CF(0) - the membrane proton channel. CF(1) has five subunits: alpha(3), beta(3), gamma(1), delta(1), epsilon(1). CF(0) has three main subunits: a(1), b(2) and c(9-12). The alpha and beta chains form an alternating ring which encloses part of the gamma chain. CF(1) is attached to CF(0) by a central stalk formed by the gamma and epsilon chains, while a peripheral stalk is formed by the delta and b chains.

It localises to the cell membrane. It catalyses the reaction ATP + H2O + 4 H(+)(in) = ADP + phosphate + 5 H(+)(out). Produces ATP from ADP in the presence of a proton gradient across the membrane. The alpha chain is a regulatory subunit. In Mycoplasma mycoides subsp. mycoides SC (strain CCUG 32753 / NCTC 10114 / PG1), this protein is ATP synthase subunit alpha.